A 301-amino-acid polypeptide reads, in one-letter code: Probable cyclic nucleotide phosphodiesterase RER_40650 (301 aa).

Residues Asp20, His22, Asp61, Asn95, His167, His205, and His207 each coordinate Fe cation. AMP is bound by residues His22, Asp61, and 95–96; that span reads NH. His207 serves as a coordination point for AMP.

This sequence belongs to the cyclic nucleotide phosphodiesterase class-III family. Requires Fe(2+) as cofactor.

The polypeptide is Probable cyclic nucleotide phosphodiesterase RER_40650 (Rhodococcus erythropolis (strain PR4 / NBRC 100887)).